We begin with the raw amino-acid sequence, 92 residues long: Small ribosomal subunit protein bS18 (92 aa).

The protein belongs to the bacterial ribosomal protein bS18 family. In terms of assembly, part of the 30S ribosomal subunit. Forms a tight heterodimer with protein bS6.

Its function is as follows. Binds as a heterodimer with protein bS6 to the central domain of the 16S rRNA, where it helps stabilize the platform of the 30S subunit. This chain is Small ribosomal subunit protein bS18, found in Ralstonia nicotianae (strain ATCC BAA-1114 / GMI1000) (Ralstonia solanacearum).